Here is a 394-residue protein sequence, read N- to C-terminus: Protein TsgA homolog (394 aa).

The next 12 membrane-spanning stretches (helical) occupy residues 11-31, 51-71, 78-98, 101-121, 134-154, 162-182, 206-226, 250-270, 273-293, 297-317, 332-352, and 361-381; these read WISF…GMVM, FLNA…EIVP, FGFV…SIAL, VSMF…TFLI, LLFT…VAAV, WYWV…LTFG, IGVL…LGFI, FWMS…FFDL, ILTV…NGAP, AWFI…IITL, FVLT…GPIV, and LQTA…LGFV.

It belongs to the major facilitator superfamily. TsgA family.

It is found in the cell inner membrane. The chain is Protein TsgA homolog from Enterobacter sp. (strain 638).